We begin with the raw amino-acid sequence, 349 residues long: 5-deoxyribose 1-phosphate isomerase (349 aa).

Substrate contacts are provided by residues 49–51 (RGA), Arg-92, and Gln-199. Asp-240 acts as the Proton donor in catalysis. 250-251 (NK) is a binding site for substrate.

Belongs to the EIF-2B alpha/beta/delta subunits family. DrdI subfamily.

The enzyme catalyses 5-deoxy-alpha-D-ribose 1-phosphate = 5-deoxy-D-ribulose 1-phosphate. The protein operates within carbohydrate degradation. Catalyzes the isomerization of 5-deoxy-alpha-D-ribose 1-phosphate to 5-deoxy-D-ribulose 1-phosphate, as part of a 5-deoxyribose salvage pathway that recycles this toxic radical SAM enzyme by-product to mainstream metabolites. This Clostridium botulinum (strain ATCC 19397 / Type A) protein is 5-deoxyribose 1-phosphate isomerase.